A 286-amino-acid chain; its full sequence is MKKISSRQEIREQVKKWQEQGLTVALVPTMGCFHQGHLSLIKKGREIADRLIVSLFVNPIQFGPGEDLDAYPRPYEKDSRLAEELGTDVLFCPETTEMYGPNFQTNISVTTLTADLCGAGRPGHFDGVATVVTKLFHLCQPDFAIFGEKDFQQLAMIKQLVIDLDFDLQIISCPIYREDDGLAMSSRNKYLNAEQRLKALCLSQALEVAKDYVLARSAAGKTIESDEVITKARGVIIDAGYEPEYISIVDQQTLEPSPTVQPGNVMALAVRIAERIRLIDNSALLT.

30–37 (MGCFHQGH) provides a ligand contact to ATP. Catalysis depends on His-37, which acts as the Proton donor. Gln-61 is a binding site for (R)-pantoate. Gln-61 provides a ligand contact to beta-alanine. ATP is bound at residue 147 to 150 (GEKD). Residue Gln-153 participates in (R)-pantoate binding. 184–187 (MSSR) is an ATP binding site.

The protein belongs to the pantothenate synthetase family. As to quaternary structure, homodimer.

It is found in the cytoplasm. The enzyme catalyses (R)-pantoate + beta-alanine + ATP = (R)-pantothenate + AMP + diphosphate + H(+). It participates in cofactor biosynthesis; (R)-pantothenate biosynthesis; (R)-pantothenate from (R)-pantoate and beta-alanine: step 1/1. Catalyzes the condensation of pantoate with beta-alanine in an ATP-dependent reaction via a pantoyl-adenylate intermediate. This Desulfotalea psychrophila (strain LSv54 / DSM 12343) protein is Pantothenate synthetase.